The following is a 216-amino-acid chain: Protein Syd (216 aa).

Belongs to the Syd family.

It is found in the cell inner membrane. In terms of biological role, interacts with the SecY protein in vivo. May bind preferentially to an uncomplexed state of SecY, thus functioning either as a chelating agent for excess SecY in the cell or as a regulatory factor that negatively controls the translocase function. This chain is Protein Syd, found in Shewanella sp. (strain ANA-3).